Consider the following 1096-residue polypeptide: MAAPVPPGAYRPNNNQQNSGGPPNFVPGSQGNPNSLAANMQNLNINRPPPPMPGSGPRPSPPFGQSPQSFPQQQQQQPRPSPMARPGPPPPAAMARPGGPPQVSQPGGFPPVGRPVAPPSNQPPFGGRPSTGPLVGGGSSFPQPGGFPASGPPGGVPSGPPSGARPIGFGSPPPMGPGMSMPPPSGMPGGPLSNGPPPSGMHGGHLSNGPPPSGMPGGPLSNGPPPPMMGPGAFPRGSQFTSGPMMAPPPPYGQPPNAGPFTGNSPLSSPPAHSIPPPTNFPGVPYGRPPMPGGFPYGAPPQQLPSAPGTPGSIYGMGPMQNQSMTSVSSPSKIDLNQIPRPGSSSSPIVYETRVENKANPPPPTTVDYITRDTGNSSPRYMRCTINQIPCTVDLLSTSGMQLALIVQPMALSHPSEEPIQVVDFGESGPVRCSRCKGYVNPFMKFIDQGRKFICNLCGYTDETPRDYQCNLGPDGRRRDADERPELCRGTVDFVATKEYMVRDPMPAVYFFLIDVSMNAIQTGATAAACSAIQQVLSDLPEGPRTFVGIATFDSTIHFYNLKRALQQPLMLIVPDVQDVYTPLETDVIVQLSECRQHLEILLESIPTMFQESKSPESAFGAAVKAAFLAMKSTGGKLMVFQSVLPSVGIGALSSREADGRANASAGEKEAHKLLQPADKTLRTMAIEFAEYQVCVDLFITTQAYVDMASISEIPRTTGGQVYCYYPFSALSDPPKLYNDLRWNITRPQGFEAVMRVRCSQGIQVQEYSGNFCKRIPTDIDLPAIDCDKAIMVTLKHDDKLQDGAECGFQCALLYTTISGERRIRVLNLSIPCTNMLSNLFRSADLDSQFACMLKQAANEIPSKALPLVKEQATNDCITILHSYRKFCATVTSTGQLILPEALKLLPLYTLALTKGVGLRMDGRIDDRSFWINHVSSLSTPLAIPLVYPRMIAVHDLDANDNEENVVPCPIPLQSEHLSDEGVYFLENGEDGLIYIGESVNSDILQKLFNVRSAAELPSQYVLQKYDNQLSKKFNDVVNEIRRQRSSYLRIKLCKKGDPAGNMLFQSYMVEDRGSGGASYVDFLVSVHRQIQHKLN.

A disordered region spans residues 1-315 (MAAPVPPGAY…SAPGTPGSIY (315 aa)). Positions 12–23 (PNNNQQNSGGPP) are enriched in low complexity. Over residues 27–45 (PGSQGNPNSLAANMQNLNI) the composition is skewed to polar residues. Residues 47–64 (RPPPPMPGSGPRPSPPFG) show a composition bias toward pro residues. A compositionally biased stretch (low complexity) spans 65–78 (QSPQSFPQQQQQQP). A compositionally biased stretch (pro residues) spans 79–92 (RPSPMARPGPPPPA). Low complexity predominate over residues 93 to 107 (AMARPGGPPQVSQPG). Residues 108 to 122 (GFPPVGRPVAPPSNQ) are compositionally biased toward pro residues. Low complexity predominate over residues 140-149 (SFPQPGGFPA). Pro residues-rich tracts occupy residues 150 to 160 (SGPPGGVPSGP), 171 to 186 (SPPP…PPSG), 246 to 258 (MAPP…PPNA), and 287 to 303 (GRPP…PPQQ). Zn(2+) is bound by residues Cys-433, Cys-436, Cys-455, and Cys-458. Positions 433–458 (CSRCKGYVNPFMKFIDQGRKFICNLC) are zinc finger-like.

This sequence belongs to the SEC23/SEC24 family. SEC24 subfamily. Component of the coat protein complex II (COPII), composed of at least five proteins: the Sec23/24 complex, the Sec13/31 complex and Sar1. As to expression, mainly expressed in pollen, roots, stems, petioles and hypocotyls, and, to a lower extent, in leaves and cotyledons.

The protein resides in the cytoplasmic vesicle. It localises to the COPII-coated vesicle membrane. Its subcellular location is the endoplasmic reticulum membrane. The protein localises to the golgi apparatus membrane. In terms of biological role, component of the coat protein complex II (COPII), that covers ER-derived vesicles involved in transport from the endoplasmic reticulum to the Golgi apparatus. COPII is composed of at least five proteins: the SEC23/24 complex, the SEC13/31 complex, and the protein SAR1. Acts in the cytoplasm to promote the transport of secretory, plasma membrane, and vacuolar proteins from the endoplasmic reticulum to the Golgi complex. This is Protein transport protein SEC24 B from Arabidopsis thaliana (Mouse-ear cress).